Consider the following 358-residue polypeptide: Zinc-type alcohol dehydrogenase-like protein YogA (358 aa).

This sequence belongs to the zinc-containing alcohol dehydrogenase family. Quinone oxidoreductase subfamily.

The protein operates within secondary metabolite biosynthesis. Its function is as follows. Zinc-type alcohol dehydrogenase-like protein; part of the gene cluster that mediates the biosynthesis of phomenoic acid, a long chain aliphatic carboxylic acid that does not appear to be essential for pathogenicity but may play a role in allowing to outcompete other fungi in the environmental niche via its antifungal properties. The polyketide synthase produces the long methylated aliphatic carboxylic acid chain of phomenoic acid. The cluster-specific cytochrome P450 monooxygenase may then hydroxylate the methyl group of carbon 31. The putative dehydrogenase YogA, which has no obvious role in phomenoic acid biosynthesis, may further modify phomenoic acid to produce a compound not identified yet. The polypeptide is Zinc-type alcohol dehydrogenase-like protein YogA (Leptosphaeria maculans (strain JN3 / isolate v23.1.3 / race Av1-4-5-6-7-8) (Blackleg fungus)).